The sequence spans 418 residues: Serine/threonine-protein kinase Sgk1 (418 aa).

Residues 50 to 78 (PQEPELLNENSSPPPSPSQQINLGPSSNP) are disordered. Over residues 68–78 (QQINLGPSSNP) the composition is skewed to polar residues. The 258-residue stretch at 85–342 (FQFLKIIGKG…FMEIKNHMFF (258 aa)) folds into the Protein kinase domain. Residues 91–99 (IGKGSFGKV) and lysine 114 contribute to the ATP site. Aspartate 209 serves as the catalytic Proton acceptor. One can recognise an AGC-kinase C-terminal domain in the interval 343–418 (SPINWDDLIN…SYAPPMESYL (76 aa)).

This sequence belongs to the protein kinase superfamily. AGC Ser/Thr protein kinase family.

It localises to the cytoplasm. It is found in the nucleus. The protein localises to the endoplasmic reticulum. The enzyme catalyses L-seryl-[protein] + ATP = O-phospho-L-seryl-[protein] + ADP + H(+). It carries out the reaction L-threonyl-[protein] + ATP = O-phospho-L-threonyl-[protein] + ADP + H(+). Functionally, protein kinase that may play an important role in cellular stress response. Plays an important role in activating certain potassium, sodium, and chloride channels, suggesting an involvement in the regulation of processes such as cell survival, neuronal excitability, and renal sodium excretion. The chain is Serine/threonine-protein kinase Sgk1 (sgk1) from Xenopus tropicalis (Western clawed frog).